A 202-amino-acid chain; its full sequence is NADH-ubiquinone oxidoreductase chain 6 (202 aa).

5 consecutive transmembrane segments (helical) span residues 1-21, 29-49, 52-72, 96-116, and 156-176; these read MVTM…IMVI, SVFW…LLGV, IALM…LFVI, VPIG…SWLI, and YYLF…AIVL.

It belongs to the complex I subunit 6 family.

It is found in the mitochondrion membrane. It carries out the reaction a ubiquinone + NADH + 5 H(+)(in) = a ubiquinol + NAD(+) + 4 H(+)(out). Functionally, core subunit of the mitochondrial membrane respiratory chain NADH dehydrogenase (Complex I) that is believed to belong to the minimal assembly required for catalysis. Complex I functions in the transfer of electrons from NADH to the respiratory chain. The immediate electron acceptor for the enzyme is believed to be ubiquinone. This Metridium senile (Brown sea anemone) protein is NADH-ubiquinone oxidoreductase chain 6 (ND6).